The following is a 163-amino-acid chain: Staphylokinase (163 aa).

Positions 1 to 27 are cleaved as a signal peptide; sequence MLKRSLLFLTVLLLLFSFSSITNEVSA.

Belongs to the staphylokinase family.

The protein localises to the secreted. In terms of biological role, potent plasminogen activator that converts plasminogen into plasmin. It forms a 1:1 complex with plasmin, which in turn activates other plasminogen molecules. The protein is Staphylokinase (sak) of Staphylococcus aureus (strain MW2).